The chain runs to 321 residues: tRNA-dihydrouridine synthase B (321 aa).

FMN contacts are provided by residues 16–18 (PMA) and Q70. C100 serves as the catalytic Proton donor. Residues K139, 200 to 202 (NGD), and 224 to 225 (GR) each bind FMN.

The protein belongs to the Dus family. DusB subfamily. The cofactor is FMN.

The enzyme catalyses a 5,6-dihydrouridine in tRNA + NAD(+) = a uridine in tRNA + NADH + H(+). The catalysed reaction is a 5,6-dihydrouridine in tRNA + NADP(+) = a uridine in tRNA + NADPH + H(+). Catalyzes the synthesis of 5,6-dihydrouridine (D), a modified base found in the D-loop of most tRNAs, via the reduction of the C5-C6 double bond in target uridines. This chain is tRNA-dihydrouridine synthase B, found in Pectobacterium carotovorum (Erwinia carotovora).